An 85-amino-acid chain; its full sequence is Probable Thioredoxin (85 aa).

The 84-residue stretch at 2 to 85 (VVNIEVFTSP…LFEAINDEME (84 aa)) folds into the Glutaredoxin domain. A disulfide bridge links cysteine 13 with cysteine 16.

Belongs to the glutaredoxin family.

It localises to the cytoplasm. Its function is as follows. Acts to maintain redox homeostasis; functions as a protein disulfide reductase. The sequence is that of Probable Thioredoxin from Methanothermobacter thermautotrophicus (strain ATCC 29096 / DSM 1053 / JCM 10044 / NBRC 100330 / Delta H) (Methanobacterium thermoautotrophicum).